The chain runs to 518 residues: D-aminopeptidase (518 aa).

Ser62 serves as the catalytic Nucleophile. Lys65 serves as the catalytic Proton donor/acceptor. The disordered stretch occupies residues 373–392 (FGTGPEKMDISGENEAQSSM). Positions 477–487 (QRSMDAPSPGE) are important for specificity. Asp481 serves as a coordination point for substrate.

The protein belongs to the peptidase S12 family. Homodimer.

It carries out the reaction Release of an N-terminal D-amino acid from a peptide, Xaa-|-Yaa-, in which Xaa is preferably D-Ala, D-Ser or D-Thr. D-amino acid amides and methyl esters also are hydrolyzed, as is glycine amide.. With respect to regulation, inhibited by beta-lactam compounds such as 6-aminopenicillic acid, 7-aminocephalosporanic acid, benzylpenicillin and ampicillin. Inhibited by p-chloromercuribenzoate. In terms of biological role, hydrolyzes N-terminal residues in D-amino acid-containing peptides. The polypeptide is D-aminopeptidase (Brucella melitensis biotype 1 (strain ATCC 23456 / CCUG 17765 / NCTC 10094 / 16M)).